Here is a 248-residue protein sequence, read N- to C-terminus: Aspartate/glutamate leucyltransferase (248 aa).

Belongs to the R-transferase family. Bpt subfamily.

Its subcellular location is the cytoplasm. It catalyses the reaction N-terminal L-glutamyl-[protein] + L-leucyl-tRNA(Leu) = N-terminal L-leucyl-L-glutamyl-[protein] + tRNA(Leu) + H(+). It carries out the reaction N-terminal L-aspartyl-[protein] + L-leucyl-tRNA(Leu) = N-terminal L-leucyl-L-aspartyl-[protein] + tRNA(Leu) + H(+). In terms of biological role, functions in the N-end rule pathway of protein degradation where it conjugates Leu from its aminoacyl-tRNA to the N-termini of proteins containing an N-terminal aspartate or glutamate. The protein is Aspartate/glutamate leucyltransferase of Methylobacterium nodulans (strain LMG 21967 / CNCM I-2342 / ORS 2060).